The primary structure comprises 428 residues: Phosphoglucosamine mutase (428 aa).

S96 acts as the Phosphoserine intermediate in catalysis. Mg(2+) is bound by residues S96, D229, D231, and D233. S96 bears the Phosphoserine mark.

Belongs to the phosphohexose mutase family. Requires Mg(2+) as cofactor. Post-translationally, activated by phosphorylation.

The catalysed reaction is alpha-D-glucosamine 1-phosphate = D-glucosamine 6-phosphate. Functionally, catalyzes the conversion of glucosamine-6-phosphate to glucosamine-1-phosphate. In Thermotoga neapolitana (strain ATCC 49049 / DSM 4359 / NBRC 107923 / NS-E), this protein is Phosphoglucosamine mutase.